The following is a 299-amino-acid chain: Zinc finger protein 414 (299 aa).

Composition is skewed to polar residues over residues 1–20 and 69–81; these read MEEP…SSSG and DSCQ…TGVG. Residues 1-98 are disordered; sequence MEEPSRPSSD…PRRRPPPGKQ (98 aa). 2 C2H2-type zinc fingers span residues 99 to 123 and 135 to 159; these read IPCS…LRTH and FRCS…GKLH. The C2H2-type 3; degenerate zinc-finger motif lies at 166 to 190; the sequence is FKCENCLLRFRTHRSLFKHLHVCID. 2 disordered regions span residues 193–228 and 254–299; these read QNPA…PFPL and PRLR…GACR. The segment covering 203-215 has biased composition (basic and acidic residues); sequence LDKEPPVPERPPE. Residues 217 to 228 are compositionally biased toward low complexity; it reads DPSSSLGLPFPL.

It belongs to the krueppel C2H2-type zinc-finger protein family.

It localises to the nucleus. May be involved in transcriptional regulation. This is Zinc finger protein 414 (Znf414) from Mus musculus (Mouse).